The primary structure comprises 203 residues: Ribosome maturation factor RimP (203 aa).

Residues 184–203 (RRGSAPVEDEEGEGEAPTAH) form a disordered region.

It belongs to the RimP family.

Its subcellular location is the cytoplasm. Required for maturation of 30S ribosomal subunits. This chain is Ribosome maturation factor RimP, found in Methylobacterium nodulans (strain LMG 21967 / CNCM I-2342 / ORS 2060).